The primary structure comprises 278 residues: Tryptophan 2,3-dioxygenase (278 aa).

Substrate is bound by residues Phe47 to His51, Tyr109, and Arg113. Residue His236 participates in heme binding. A substrate-binding site is contributed by Thr250.

Belongs to the tryptophan 2,3-dioxygenase family. As to quaternary structure, homotetramer. The cofactor is heme.

The catalysed reaction is L-tryptophan + O2 = N-formyl-L-kynurenine. It participates in amino-acid degradation; L-tryptophan degradation via kynurenine pathway; L-kynurenine from L-tryptophan: step 1/2. In terms of biological role, heme-dependent dioxygenase that catalyzes the oxidative cleavage of the L-tryptophan (L-Trp) pyrrole ring and converts L-tryptophan to N-formyl-L-kynurenine. Catalyzes the oxidative cleavage of the indole moiety. The chain is Tryptophan 2,3-dioxygenase from Ralstonia pickettii (strain 12J).